The following is a 219-amino-acid chain: Putative GEM-like protein 8 (219 aa).

Residues 96-174 (KIYKRLFKVS…CKINGVNQSQ (79 aa)) form the GRAM domain.

It belongs to the GEM family.

The sequence is that of Putative GEM-like protein 8 from Arabidopsis thaliana (Mouse-ear cress).